The chain runs to 143 residues: Hemoglobin cathodic subunit alpha (143 aa).

Ser-1 carries the N-acetylserine modification. The Globin domain maps to 1–143 (SLAPGDKTVV…VCAALSDKYR (143 aa)). His-59 lines the O2 pocket. His-89 contacts heme b.

This sequence belongs to the globin family. Heterotetramer of two alpha chains and two beta chains. In terms of tissue distribution, red blood cells.

In terms of biological role, involved in oxygen transport from gills to the various peripheral tissues. The polypeptide is Hemoglobin cathodic subunit alpha (Gymnothorax unicolor (Brown moray)).